A 141-amino-acid polypeptide reads, in one-letter code: ATP synthase epsilon chain (141 aa).

This sequence belongs to the ATPase epsilon chain family. F-type ATPases have 2 components, CF(1) - the catalytic core - and CF(0) - the membrane proton channel. CF(1) has five subunits: alpha(3), beta(3), gamma(1), delta(1), epsilon(1). CF(0) has three main subunits: a, b and c.

It localises to the cell inner membrane. Produces ATP from ADP in the presence of a proton gradient across the membrane. This is ATP synthase epsilon chain from Hahella chejuensis (strain KCTC 2396).